Here is a 130-residue protein sequence, read N- to C-terminus: Histone H2A type 1-F (130 aa).

The interval 1–22 is disordered; the sequence is MSGRGKQGGKARAKAKTRSSRA. At S2 the chain carries Phosphoserine; by RPS6KA5. R4 carries the citrulline; alternate modification. Symmetric dimethylarginine; by PRMT5; alternate is present on R4. An N6-(2-hydroxyisobutyryl)lysine mark is found at K6 and K10. Residues 7–19 show a composition bias toward basic residues; it reads QGGKARAKAKTRS. K10 carries the N6-lactoyllysine; alternate modification. K37 is modified (N6-(2-hydroxyisobutyryl)lysine; alternate). K37 is modified (N6-(beta-hydroxybutyryl)lysine; alternate). K37 carries the N6-crotonyllysine; alternate modification. An N6-(2-hydroxyisobutyryl)lysine mark is found at K75, K76, and K96. K96 is modified (N6-glutaryllysine; alternate). Residue Q105 is modified to N5-methylglutamine. K119 bears the N6-(2-hydroxyisobutyryl)lysine; alternate mark. Residues K119 and K120 each carry the N6-crotonyllysine; alternate modification. An N6-glutaryllysine; alternate mark is found at K119 and K120. K120 is covalently cross-linked (Glycyl lysine isopeptide (Lys-Gly) (interchain with G-Cter in ubiquitin); alternate). T121 is subject to Phosphothreonine; by DCAF1. An N6-crotonyllysine; alternate modification is found at K126. K126 bears the N6-glutaryllysine; alternate mark.

It belongs to the histone H2A family. In terms of assembly, the nucleosome is a histone octamer containing two molecules each of H2A, H2B, H3 and H4 assembled in one H3-H4 heterotetramer and two H2A-H2B heterodimers. The octamer wraps approximately 147 bp of DNA. Post-translationally, deiminated on Arg-4 in granulocytes upon calcium entry. Monoubiquitination of Lys-120 (H2AK119Ub) by RING1, TRIM37 and RNF2/RING2 complex gives a specific tag for epigenetic transcriptional repression and participates in X chromosome inactivation of female mammals. It is involved in the initiation of both imprinted and random X inactivation. Ubiquitinated H2A is enriched in inactive X chromosome chromatin. Ubiquitination of H2A functions downstream of methylation of 'Lys-27' of histone H3 (H3K27me). H2AK119Ub by RNF2/RING2 can also be induced by ultraviolet and may be involved in DNA repair. Following DNA double-strand breaks (DSBs), it is ubiquitinated through 'Lys-63' linkage of ubiquitin moieties by the E2 ligase UBE2N and the E3 ligases RNF8 and RNF168, leading to the recruitment of repair proteins to sites of DNA damage. Ubiquitination at Lys-14 and Lys-16 (H2AK13Ub and H2AK15Ub, respectively) in response to DNA damage is initiated by RNF168 that mediates monoubiquitination at these 2 sites, and 'Lys-63'-linked ubiquitin are then conjugated to monoubiquitin; RNF8 is able to extend 'Lys-63'-linked ubiquitin chains in vitro. H2AK119Ub and ionizing radiation-induced 'Lys-63'-linked ubiquitination (H2AK13Ub and H2AK15Ub) are distinct events. In terms of processing, phosphorylation on Ser-2 (H2AS1ph) is enhanced during mitosis. Phosphorylation on Ser-2 by RPS6KA5/MSK1 directly represses transcription. Acetylation of H3 inhibits Ser-2 phosphorylation by RPS6KA5/MSK1. Phosphorylation at Thr-121 (H2AT120ph) by DCAF1 is present in the regulatory region of many tumor suppresor genes and down-regulates their transcription. Post-translationally, symmetric dimethylation on Arg-4 by the PRDM1/PRMT5 complex may play a crucial role in the germ-cell lineage. Glutamine methylation at Gln-105 (H2AQ104me) by FBL is specifically dedicated to polymerase I. It is present at 35S ribosomal DNA locus and impairs binding of the FACT complex. In terms of processing, crotonylation (Kcr) is specifically present in male germ cells and marks testis-specific genes in post-meiotic cells, including X-linked genes that escape sex chromosome inactivation in haploid cells. Crotonylation marks active promoters and enhancers and confers resistance to transcriptional repressors. It is also associated with post-meiotically activated genes on autosomes. Post-translationally, lactylated in macrophages by EP300/P300 by using lactoyl-CoA directly derived from endogenous or exogenous lactate, leading to stimulates gene transcription.

It is found in the nucleus. The protein resides in the chromosome. Core component of nucleosome. Nucleosomes wrap and compact DNA into chromatin, limiting DNA accessibility to the cellular machineries which require DNA as a template. Histones thereby play a central role in transcription regulation, DNA repair, DNA replication and chromosomal stability. DNA accessibility is regulated via a complex set of post-translational modifications of histones, also called histone code, and nucleosome remodeling. This chain is Histone H2A type 1-F, found in Rattus norvegicus (Rat).